The following is a 1104-amino-acid chain: DNA polymerase delta catalytic subunit (1104 aa).

The interval 1–60 (MKRSIVTGGGNNDKKFKAQPPPKNNYRGGGDDEEDDEFEEDDDEDEGDEFGEEEDEDDID) is disordered. Positions 31–60 (DDEEDDEFEEDDDEDEGDEFGEEEDEDDID) are enriched in acidic residues. Residues Cys1012, Cys1015, Cys1027, and Cys1030 each contribute to the Zn(2+) site. The CysA-type zinc-finger motif lies at 1012–1030 (CMNCPKELTDTESTTCINC). Residues Cys1059, Cys1062, Cys1072, and Cys1077 each coordinate [4Fe-4S] cluster. The CysB motif motif lies at 1059-1077 (CQRCSGSLHQPVLCSNRDC).

The protein belongs to the DNA polymerase type-B family. In terms of assembly, heterotetramer composed of subunits of 125 kDa, 50 kDa, 66 kDa and 12 kDa. The 125 kDa subunit contains the polymerase active site and most likely the active site for the 3'-5' exonuclease activity. It depends on [4Fe-4S] cluster as a cofactor.

The protein localises to the nucleus. It carries out the reaction DNA(n) + a 2'-deoxyribonucleoside 5'-triphosphate = DNA(n+1) + diphosphate. Functionally, possesses two enzymatic activities: DNA synthesis (polymerase) and an exonucleolytic activity that degrades single stranded DNA in the 3'- to 5'-direction. The polypeptide is DNA polymerase delta catalytic subunit (pold1) (Dictyostelium discoideum (Social amoeba)).